Reading from the N-terminus, the 411-residue chain is SKA complex subunit 3 (411 aa).

Phosphoserine occurs at positions 34, 119, 138, 154, and 158. The interval Tyr-102–Asn-410 is binds the NDC80 complex. Thr-189 and Thr-216 each carry phosphothreonine. A binds microtubules and contacts the microtubule-binding domain of SKA1 region spans residues Pro-195 to Asn-410. Position 289 is a phosphoserine (Ser-289). Phosphothreonine is present on Thr-297. Ser-324 and Ser-352 each carry phosphoserine. The tract at residues Glu-349–Asn-410 is required for localization to kinetochores. Thr-363 carries the post-translational modification Phosphothreonine.

This sequence belongs to the SKA3 family. Component of the SKA complex, composed of SKA1, SKA2 and SKA3. The SKA complex is a homodimer organized around a central W-shaped coiled-coil structure, formed by the interacting domains of SKA1, SKA2, and SKA3, each end of the 'W' is extended further by the C-terminal microtubule-binding domains of SKA1 and SKA3; the complex forms extended structures on microtubules. Interacts with the NDC80-NUF2 heterodimer of the NDC80 complex (via coiled coils); the interaction localizes the SKA complex to the kinetochore and is required to establish kinetochore-microtubule end-on attachments. Interacts with polo-like kinase PLK1.

The protein localises to the cytoplasm. It localises to the cytoskeleton. The protein resides in the spindle. Its subcellular location is the chromosome. It is found in the centromere. The protein localises to the kinetochore. It localises to the microtubule organizing center. The protein resides in the centrosome. Component of the SKA complex, a microtubule plus end-binding complex of the outer kinetochore that stabilizes spindle microtubule-kinetochore attachments, promotes alignment of chromosomes at the mitotic spindle equator (chromosome congression) and assists suppression of the spindle assembly checkpoint. Kinetochores, consisting of a centromere-associated inner segment and a microtubule-contacting outer segment, play a crucial role in chromosome segregation by mediating the physical connection between centromeric DNA and spindle microtubules. The outer kinetochore is made up of the ten-subunit KMN network complex, comprising the MIS12, NDC80 and KNL1 complexes, and auxiliary microtubule-associated components such as the SKA complex; together they connect the outer kinetochore with the inner kinetochore, bind microtubules, and mediate interactions with mitotic checkpoint proteins that delay anaphase until chromosomes are bioriented on the spindle. The SKA complex is loaded onto bioriented kinetochores and it facilitates chromosome congression by stabilizing microtubules together with MAPRE1, and end-on attachment of the NDC80 complex to depolymerizing spindle microtubules, thereby assisting the poleward-moving kinetochore in withstanding microtubule pulling forces. The complex associates with dynamic microtubule plus-ends and can track both depolymerizing and elongating microtubules. The complex recruits protein phosphatase 1 (PP1) to the kinetochore in prometaphase and metaphase, to oppose spindle assembly checkpoint signaling and promote the onset of anaphase. Within the complex, binds microtubules but with a much lower affinity than SKA1. Promotes stability of the polo-like kinase PLK1 protein. During meiosis the SKA complex stabilizes the meiotic spindle and is required for its migration to the cortex. This Mus musculus (Mouse) protein is SKA complex subunit 3 (Ska3).